The sequence spans 472 residues: Aspartyl/glutamyl-tRNA(Asn/Gln) amidotransferase subunit B (472 aa).

Belongs to the GatB/GatE family. GatB subfamily. Heterotrimer of A, B and C subunits.

The enzyme catalyses L-glutamyl-tRNA(Gln) + L-glutamine + ATP + H2O = L-glutaminyl-tRNA(Gln) + L-glutamate + ADP + phosphate + H(+). The catalysed reaction is L-aspartyl-tRNA(Asn) + L-glutamine + ATP + H2O = L-asparaginyl-tRNA(Asn) + L-glutamate + ADP + phosphate + 2 H(+). Allows the formation of correctly charged Asn-tRNA(Asn) or Gln-tRNA(Gln) through the transamidation of misacylated Asp-tRNA(Asn) or Glu-tRNA(Gln) in organisms which lack either or both of asparaginyl-tRNA or glutaminyl-tRNA synthetases. The reaction takes place in the presence of glutamine and ATP through an activated phospho-Asp-tRNA(Asn) or phospho-Glu-tRNA(Gln). This Campylobacter jejuni subsp. jejuni serotype O:6 (strain 81116 / NCTC 11828) protein is Aspartyl/glutamyl-tRNA(Asn/Gln) amidotransferase subunit B.